The primary structure comprises 386 residues: Paralemmin-1 (386 aa).

Residues 4-115 (VEANTLQQER…TKENLAEAAA (112 aa)) adopt a coiled-coil conformation. Disordered regions lie at residues 21 to 40 (RKRQ…DRRQ), 51 to 149 (ERWL…PMKA), 240 to 290 (EATA…TMIF), and 321 to 378 (DAES…AKKQ). Composition is skewed to basic and acidic residues over residues 24–40 (QTEI…DRRQ) and 68–95 (AMKK…RELE). A compositionally biased stretch (low complexity) spans 97 to 116 (LENSSSVTSTKENLAEAAAP). 3 stretches are compositionally biased toward basic and acidic residues: residues 259–282 (PRRE…EPSR), 322–334 (AESK…KDHA), and 365–377 (EAKE…DAKK). 2 S-palmitoyl cysteine lipidation sites follow: C380 and C382. C383 bears the Cysteine methyl ester mark. C383 carries the S-farnesyl cysteine lipid modification. Positions 384 to 386 (TVM) are cleaved as a propeptide — removed in mature form.

This sequence belongs to the paralemmin family. In terms of assembly, interacts with dopamine receptor DRD3. Post-translationally, phosphorylated. In terms of tissue distribution, expressed in the lens (at protein level). Highly expressed in forebrain and cerebellum with lower expression in adrenal gland and heart. Expression weak or undetectable in other tissues.

The protein resides in the cell membrane. It is found in the cell projection. The protein localises to the filopodium membrane. Its subcellular location is the axon. It localises to the dendrite. The protein resides in the dendritic spine. It is found in the basolateral cell membrane. The protein localises to the apicolateral cell membrane. Functionally, involved in plasma membrane dynamics and cell process formation. Isoform 1 and isoform 2 are necessary for axonal and dendritic filopodia induction, for dendritic spine maturation and synapse formation in a palmitoylation-dependent manner. This is Paralemmin-1 (PALM) from Gallus gallus (Chicken).